Here is an 804-residue protein sequence, read N- to C-terminus: Leucine--tRNA ligase (804 aa).

The 'HIGH' region signature appears at 40–51 (PYPSGAGLHVGH). Residues 576 to 580 (KMSKS) carry the 'KMSKS' region motif. Lys579 contributes to the ATP binding site.

Belongs to the class-I aminoacyl-tRNA synthetase family.

It is found in the cytoplasm. It carries out the reaction tRNA(Leu) + L-leucine + ATP = L-leucyl-tRNA(Leu) + AMP + diphosphate. This chain is Leucine--tRNA ligase, found in Bacillus licheniformis (strain ATCC 14580 / DSM 13 / JCM 2505 / CCUG 7422 / NBRC 12200 / NCIMB 9375 / NCTC 10341 / NRRL NRS-1264 / Gibson 46).